The following is a 281-amino-acid chain: Probable endonuclease 4 (281 aa).

Zn(2+) contacts are provided by His-69, His-109, Glu-145, Asp-179, His-182, His-216, Asp-229, His-231, and Glu-261.

It belongs to the AP endonuclease 2 family. Zn(2+) serves as cofactor.

It carries out the reaction Endonucleolytic cleavage to 5'-phosphooligonucleotide end-products.. In terms of biological role, endonuclease IV plays a role in DNA repair. It cleaves phosphodiester bonds at apurinic or apyrimidinic (AP) sites, generating a 3'-hydroxyl group and a 5'-terminal sugar phosphate. The chain is Probable endonuclease 4 from Nautilia profundicola (strain ATCC BAA-1463 / DSM 18972 / AmH).